Reading from the N-terminus, the 418-residue chain is Histidinol dehydrogenase (418 aa).

Positions 119, 180, and 203 each coordinate NAD(+). Residues threonine 226, glutamine 248, and histidine 251 each coordinate substrate. Zn(2+) is bound by residues glutamine 248 and histidine 251. Residues glutamate 316 and histidine 317 each act as proton acceptor in the active site. Histidine 317, aspartate 350, glutamate 404, and histidine 409 together coordinate substrate. Aspartate 350 lines the Zn(2+) pocket. Residue histidine 409 coordinates Zn(2+).

It belongs to the histidinol dehydrogenase family. It depends on Zn(2+) as a cofactor.

It catalyses the reaction L-histidinol + 2 NAD(+) + H2O = L-histidine + 2 NADH + 3 H(+). It participates in amino-acid biosynthesis; L-histidine biosynthesis; L-histidine from 5-phospho-alpha-D-ribose 1-diphosphate: step 9/9. In terms of biological role, catalyzes the sequential NAD-dependent oxidations of L-histidinol to L-histidinaldehyde and then to L-histidine. This chain is Histidinol dehydrogenase, found in Staphylococcus aureus (strain MRSA252).